Consider the following 227-residue polypeptide: uncharacterized protein (227 aa).

Its subcellular location is the virion. This is an uncharacterized protein from Acanthamoeba polyphaga (Amoeba).